The sequence spans 28 residues: ADVPGNYPLDSYGNCYPCTILGDNQYCI.

The 26-residue stretch at 3–28 (VPGNYPLDSYGNCYPCTILGDNQYCI) folds into the LCN-type CS-alpha/beta domain.

Belongs to the long (3 C-C) scorpion toxin superfamily. In terms of tissue distribution, expressed by the venom gland.

Its subcellular location is the secreted. In terms of biological role, binds to sodium channels (Nav) and affects the channel activation process. This Androctonus crassicauda (Arabian fat-tailed scorpion) protein is Toxin a.